The primary structure comprises 375 residues: Chaperone protein DnaJ (375 aa).

The J domain occupies 5-69 (DYYEILGIDK…QKRAQYDQFG (65 aa)). A CR-type zinc finger spans residues 131–213 (GKETDIEIPK…CGGSGTVQKN (83 aa)). Residues Cys144, Cys147, Cys161, Cys164, Cys187, Cys190, Cys201, and Cys204 each contribute to the Zn(2+) site. CXXCXGXG motif repeat units follow at residues 144 to 151 (CDTCNGSG), 161 to 168 (CSHCHGSG), 187 to 194 (CNYCQGTG), and 201 to 208 (CNTCGGSG).

The protein belongs to the DnaJ family. In terms of assembly, homodimer. Requires Zn(2+) as cofactor.

It localises to the cytoplasm. Functionally, participates actively in the response to hyperosmotic and heat shock by preventing the aggregation of stress-denatured proteins and by disaggregating proteins, also in an autonomous, DnaK-independent fashion. Unfolded proteins bind initially to DnaJ; upon interaction with the DnaJ-bound protein, DnaK hydrolyzes its bound ATP, resulting in the formation of a stable complex. GrpE releases ADP from DnaK; ATP binding to DnaK triggers the release of the substrate protein, thus completing the reaction cycle. Several rounds of ATP-dependent interactions between DnaJ, DnaK and GrpE are required for fully efficient folding. Also involved, together with DnaK and GrpE, in the DNA replication of plasmids through activation of initiation proteins. The polypeptide is Chaperone protein DnaJ (Oceanobacillus iheyensis (strain DSM 14371 / CIP 107618 / JCM 11309 / KCTC 3954 / HTE831)).